The following is a 98-amino-acid chain: Integration host factor subunit alpha (98 aa).

Residues 52 to 73 are disordered; it reads FDLRQKSERPGRNPKTGEDIPI. Positions 54–73 are enriched in basic and acidic residues; sequence LRQKSERPGRNPKTGEDIPI.

This sequence belongs to the bacterial histone-like protein family. As to quaternary structure, heterodimer of an alpha and a beta chain.

In terms of biological role, this protein is one of the two subunits of integration host factor, a specific DNA-binding protein that functions in genetic recombination as well as in transcriptional and translational control. This Pseudoalteromonas atlantica (strain T6c / ATCC BAA-1087) protein is Integration host factor subunit alpha.